A 706-amino-acid chain; its full sequence is Elongation factor G (706 aa).

The tr-type G domain occupies 8 to 297; the sequence is SYVRNIGIGA…AVVDYLPSPN (290 aa). GTP-binding positions include 17–24, 95–99, and 149–152; these read AHIDAGKT, DTPGH, and NKMD.

It belongs to the TRAFAC class translation factor GTPase superfamily. Classic translation factor GTPase family. EF-G/EF-2 subfamily.

It is found in the cytoplasm. In terms of biological role, catalyzes the GTP-dependent ribosomal translocation step during translation elongation. During this step, the ribosome changes from the pre-translocational (PRE) to the post-translocational (POST) state as the newly formed A-site-bound peptidyl-tRNA and P-site-bound deacylated tRNA move to the P and E sites, respectively. Catalyzes the coordinated movement of the two tRNA molecules, the mRNA and conformational changes in the ribosome. This chain is Elongation factor G, found in Orientia tsutsugamushi (strain Ikeda) (Rickettsia tsutsugamushi).